The sequence spans 295 residues: Small ribosomal subunit protein uS2 (295 aa).

Belongs to the universal ribosomal protein uS2 family.

In Rickettsia typhi (strain ATCC VR-144 / Wilmington), this protein is Small ribosomal subunit protein uS2.